A 292-amino-acid polypeptide reads, in one-letter code: uncharacterized protein (292 aa).

The segment at 62–81 (ESSSDSDMGFHESQQNQKSN) is disordered.

This is an uncharacterized protein from Homo sapiens (Human).